The following is a 429-amino-acid chain: MASIQRVTARQILDSRGTPTVEVDVTTGEGVLGRAAVPSGASTGAYEAVELRDGDADRYHGQGVLRAVGHVNDAVADALHGMSVLEQVAIDDTLRALDGTEDKSNLGANAILGASLAAAKAGAATLGVPLYRHLGRATARTLPVPLMNILNGGEHADNNVDMQEFMIAPAGADSFSEALRTGAEVFHTLASVLQDRDYSTAVGDEGGFAPDLGSNEEAVELILDAIEKAGYTAGSDVFVALDPAAAEMVEDEAYVFWKSDPDTERSSEDMVEYWAEWVDRYPILSIEDAMDEDDWDGWAMLTDAIGDEVQLVGDDLFVTNTKRLTRGVEEGCGNSILIKPNQIGTLTETLNAIETAHTHGFTAIISHRSGETEDTTIADLAVATGTGQIKTGSASRSDRVAKYNQLLRIEEQLGATAHYPRLDAFPLTN.

Gln-163 serves as a coordination point for (2R)-2-phosphoglycerate. Glu-205 (proton donor) is an active-site residue. Asp-242, Glu-287, and Asp-314 together coordinate Mg(2+). The (2R)-2-phosphoglycerate site is built by Lys-339, Arg-368, Ser-369, and Lys-390. Residue Lys-339 is the Proton acceptor of the active site.

It belongs to the enolase family. It depends on Mg(2+) as a cofactor.

Its subcellular location is the cytoplasm. It is found in the secreted. The protein resides in the cell surface. It carries out the reaction (2R)-2-phosphoglycerate = phosphoenolpyruvate + H2O. It functions in the pathway carbohydrate degradation; glycolysis; pyruvate from D-glyceraldehyde 3-phosphate: step 4/5. In terms of biological role, catalyzes the reversible conversion of 2-phosphoglycerate (2-PG) into phosphoenolpyruvate (PEP). It is essential for the degradation of carbohydrates via glycolysis. This is Enolase from Salinibacter ruber (strain DSM 13855 / M31).